The sequence spans 1818 residues: Cytadherence high molecular weight protein 2 (1818 aa).

Coiled coils occupy residues 31-880, 919-1607, 1644-1755, and 1786-1817; these read LESA…KQRE, ELKI…DNKH, HLFE…QAVQ, and LATQ…QKAA.

In terms of processing, phosphorylated mainly on serine residues.

Functionally, component of the cytoskeleton-like structure which stabilizes the shape of the wall-less Mycoplasma. This cytoskeleton-like network of accessory proteins containing HMW proteins 1 to 5 allows the proper anchoring of cytadhesin proteins in the mycoplasmal membrane at the attachment organelle. This Mycoplasma pneumoniae (strain ATCC 29342 / M129 / Subtype 1) (Mycoplasmoides pneumoniae) protein is Cytadherence high molecular weight protein 2 (hmw2).